The sequence spans 130 residues: Cytochrome c-type biogenesis protein CcmE (130 aa).

Residues 1–7 (MKKKHKR) lie on the Cytoplasmic side of the membrane. A helical; Signal-anchor for type II membrane protein transmembrane segment spans residues 8 to 28 (LLITSGIFCFLSCAVFFILTT). Over 29-130 (LKENISFFYT…DENYMPKVLK (102 aa)) the chain is Extracellular. The heme site is built by His-120 and Tyr-124.

The protein belongs to the CcmE/CycJ family.

Its subcellular location is the cell membrane. In terms of biological role, heme chaperone required for the biogenesis of c-type cytochromes. Transiently binds heme delivered by CcmC and transfers the heme to apo-cytochromes in a process facilitated by CcmF and CcmH. The polypeptide is Cytochrome c-type biogenesis protein CcmE (Wolbachia pipientis wMel).